We begin with the raw amino-acid sequence, 177 residues long: Large ribosomal subunit protein uL6 (177 aa).

Residues 151–177 (YRPPEPYKGKGIRYSDEHVVRKEAKKK) form a disordered region. Residues 155 to 177 (EPYKGKGIRYSDEHVVRKEAKKK) show a composition bias toward basic and acidic residues.

It belongs to the universal ribosomal protein uL6 family. In terms of assembly, part of the 50S ribosomal subunit.

Functionally, this protein binds to the 23S rRNA, and is important in its secondary structure. It is located near the subunit interface in the base of the L7/L12 stalk, and near the tRNA binding site of the peptidyltransferase center. This Psychrobacter sp. (strain PRwf-1) protein is Large ribosomal subunit protein uL6.